The sequence spans 316 residues: 4-hydroxy-3-methylbut-2-enyl diphosphate reductase (316 aa).

C12 serves as a coordination point for [4Fe-4S] cluster. H43 and H81 together coordinate (2E)-4-hydroxy-3-methylbut-2-enyl diphosphate. 2 residues coordinate dimethylallyl diphosphate: H43 and H81. Isopentenyl diphosphate contacts are provided by H43 and H81. C103 lines the [4Fe-4S] cluster pocket. H131 contacts (2E)-4-hydroxy-3-methylbut-2-enyl diphosphate. H131 contributes to the dimethylallyl diphosphate binding site. H131 serves as a coordination point for isopentenyl diphosphate. Residue E133 is the Proton donor of the active site. T170 contacts (2E)-4-hydroxy-3-methylbut-2-enyl diphosphate. C198 is a binding site for [4Fe-4S] cluster. (2E)-4-hydroxy-3-methylbut-2-enyl diphosphate is bound by residues S226, N228, and S271. S226, N228, and S271 together coordinate dimethylallyl diphosphate. Residues S226, N228, and S271 each coordinate isopentenyl diphosphate.

Belongs to the IspH family. [4Fe-4S] cluster is required as a cofactor.

The enzyme catalyses isopentenyl diphosphate + 2 oxidized [2Fe-2S]-[ferredoxin] + H2O = (2E)-4-hydroxy-3-methylbut-2-enyl diphosphate + 2 reduced [2Fe-2S]-[ferredoxin] + 2 H(+). The catalysed reaction is dimethylallyl diphosphate + 2 oxidized [2Fe-2S]-[ferredoxin] + H2O = (2E)-4-hydroxy-3-methylbut-2-enyl diphosphate + 2 reduced [2Fe-2S]-[ferredoxin] + 2 H(+). It participates in isoprenoid biosynthesis; dimethylallyl diphosphate biosynthesis; dimethylallyl diphosphate from (2E)-4-hydroxy-3-methylbutenyl diphosphate: step 1/1. It functions in the pathway isoprenoid biosynthesis; isopentenyl diphosphate biosynthesis via DXP pathway; isopentenyl diphosphate from 1-deoxy-D-xylulose 5-phosphate: step 6/6. In terms of biological role, catalyzes the conversion of 1-hydroxy-2-methyl-2-(E)-butenyl 4-diphosphate (HMBPP) into a mixture of isopentenyl diphosphate (IPP) and dimethylallyl diphosphate (DMAPP). Acts in the terminal step of the DOXP/MEP pathway for isoprenoid precursor biosynthesis. The polypeptide is 4-hydroxy-3-methylbut-2-enyl diphosphate reductase (Bacillus thuringiensis (strain Al Hakam)).